The sequence spans 102 residues: Class II hydrophobin 3 (102 aa).

A signal peptide spans 1 to 16 (MQFLAVAALLFTTALA). 4 disulfide bridges follow: Cys33-Cys83, Cys44-Cys74, Cys45-Cys57, and Cys84-Cys95.

It belongs to the cerato-ulmin hydrophobin family. Homotetramer. Further self-assembles to form highly ordered films at water-air interfaces through intermolecular interactions. Expressed in the conidia, vegetative growth and induction growth stages.

The protein resides in the secreted. The protein localises to the cell wall. It is found in the cytoplasm. Its function is as follows. Aerial growth, conidiation, and dispersal of filamentous fungi in the environment rely upon a capability of their secreting small amphipathic proteins called hydrophobins (HPBs) with low sequence identity. Class I can self-assemble into an outermost layer of rodlet bundles on aerial cell surfaces, conferring cellular hydrophobicity that supports fungal growth, development and dispersal; whereas Class II form highly ordered films at water-air interfaces through intermolecular interactions but contribute nothing to the rodlet structure. Hbf3 is a class II hydrophobin that has a role in vegetative growth and asexual development. In Hypocrea jecorina (strain QM6a) (Trichoderma reesei), this protein is Class II hydrophobin 3.